A 342-amino-acid chain; its full sequence is RNA 3'-terminal phosphate cyclase (342 aa).

The protein belongs to the RNA 3'-terminal cyclase family. Type 1 subfamily.

It localises to the cytoplasm. It catalyses the reaction a 3'-end 3'-phospho-ribonucleotide-RNA + GTP = a 3'-end 2',3'-cyclophospho-ribonucleotide-RNA + GMP + diphosphate. Its activity is regulated as follows. Inhibited by GMP. Catalyzes the GTP-dependent conversion of 3'-phosphate to a 2',3'-cyclic phosphodiester at the end of RNA. The biological role of this enzyme is unknown but it is likely to function in some aspects of cellular RNA processing. In Pyrococcus furiosus (strain ATCC 43587 / DSM 3638 / JCM 8422 / Vc1), this protein is RNA 3'-terminal phosphate cyclase.